The following is a 547-amino-acid chain: Glucose-6-phosphate isomerase (547 aa).

Catalysis depends on Glu-351, which acts as the Proton donor. Active-site residues include His-382 and Lys-509.

The protein belongs to the GPI family.

The protein localises to the cytoplasm. The enzyme catalyses alpha-D-glucose 6-phosphate = beta-D-fructose 6-phosphate. It participates in carbohydrate biosynthesis; gluconeogenesis. Its pathway is carbohydrate degradation; glycolysis; D-glyceraldehyde 3-phosphate and glycerone phosphate from D-glucose: step 2/4. Catalyzes the reversible isomerization of glucose-6-phosphate to fructose-6-phosphate. This chain is Glucose-6-phosphate isomerase, found in Coxiella burnetii (strain CbuK_Q154) (Coxiella burnetii (strain Q154)).